A 510-amino-acid chain; its full sequence is Scarecrow-like protein 29 (510 aa).

The segment at 90 to 142 (LDLPPEIQQPNDQSRKRSHDGFLEAQQVKKSARSKRKAIKSSEKSSKDGNKEG) is disordered. The span at 102-111 (QSRKRSHDGF) shows a compositional bias: basic and acidic residues. A compositionally biased stretch (basic residues) spans 119-128 (KSARSKRKAI). Over residues 129 to 142 (KSSEKSSKDGNKEG) the composition is skewed to basic and acidic residues. The GRAS domain occupies 136–510 (KDGNKEGRWA…EAVSFCSLWK (375 aa)). The leucine repeat I (LRI) stretch occupies residues 143 to 205 (RWAEKLLNPC…HLSSSSVSSS (63 aa)). Residues 224–294 (LLKFYEVSPW…GPPPRVRITV (71 aa)) form a VHIID region. The VHIID signature appears at 259 to 263 (LHIID). The leucine repeat II (LRII) stretch occupies residues 312 to 337 (NYGSQLLGFARSLKINLQISVLDKLQ). The interval 347–435 (LIVCAQFRLH…RKLMEGEATK (89 aa)) is PFYRE. The tract at residues 438–510 (MNAGDMNEGK…EAVSFCSLWK (73 aa)) is SAW.

Belongs to the GRAS family. As to expression, expressed in seedlings, roots and flowers.

It localises to the nucleus. Probable transcription factor involved in plant development. This chain is Scarecrow-like protein 29 (SCL29), found in Arabidopsis thaliana (Mouse-ear cress).